Consider the following 192-residue polypeptide: MSSVKLIVGLGNPGGQYEQTRHNAGFWFVEDVARQYNVQFRPETKFLGEAARIQSNGLDVWLLKPMTFMNRSGQSIQAIAKFYKIAPEEILVVHDELDLDPGVARLKTSGGHGGHNGLRDTIAALGTKDFKRLRLGIGHPGDRNQVVDYVLKAPSKTDRALIDDAIYDATRVLPDLLNDDMARAMNELHTKT.

Tyrosine 17 is a tRNA binding site. Residue histidine 22 is the Proton acceptor of the active site. Positions 68, 70, and 116 each coordinate tRNA.

It belongs to the PTH family. As to quaternary structure, monomer.

It is found in the cytoplasm. The catalysed reaction is an N-acyl-L-alpha-aminoacyl-tRNA + H2O = an N-acyl-L-amino acid + a tRNA + H(+). Functionally, hydrolyzes ribosome-free peptidyl-tRNAs (with 1 or more amino acids incorporated), which drop off the ribosome during protein synthesis, or as a result of ribosome stalling. Catalyzes the release of premature peptidyl moieties from peptidyl-tRNA molecules trapped in stalled 50S ribosomal subunits, and thus maintains levels of free tRNAs and 50S ribosomes. The protein is Peptidyl-tRNA hydrolase of Hydrogenovibrio crunogenus (strain DSM 25203 / XCL-2) (Thiomicrospira crunogena).